We begin with the raw amino-acid sequence, 123 residues long: Urotensin-2 (123 aa).

The signal sequence occupies residues 1-20 (MDRVPFCCLLFVGLLNPLLS). Positions 21-104 (FPVTDTGEMS…TVLSRLLART (84 aa)) are excised as a propeptide. The segment at 63-91 (EAEGSLGQADPSAETPTPRGSLRKALTGQ) is disordered. C117 and C122 form a disulfide bridge.

This sequence belongs to the urotensin-2 family. As to expression, brain specific.

It localises to the secreted. In terms of biological role, highly potent vasoconstrictor. The protein is Urotensin-2 (Uts2) of Rattus norvegicus (Rat).